The chain runs to 120 residues: Large ribosomal subunit protein bL20 (120 aa).

The protein belongs to the bacterial ribosomal protein bL20 family.

In terms of biological role, binds directly to 23S ribosomal RNA and is necessary for the in vitro assembly process of the 50S ribosomal subunit. It is not involved in the protein synthesizing functions of that subunit. In Novosphingobium aromaticivorans (strain ATCC 700278 / DSM 12444 / CCUG 56034 / CIP 105152 / NBRC 16084 / F199), this protein is Large ribosomal subunit protein bL20.